The primary structure comprises 201 residues: Recombination protein RecR (201 aa).

The C4-type zinc-finger motif lies at 57-72 (CADCRTFTEQEHCTIC). Positions 81–176 (GQICVVESPA…LASRIAHGVP (96 aa)) constitute a Toprim domain.

The protein belongs to the RecR family.

Its function is as follows. May play a role in DNA repair. It seems to be involved in an RecBC-independent recombinational process of DNA repair. It may act with RecF and RecO. The protein is Recombination protein RecR of Yersinia pestis bv. Antiqua (strain Antiqua).